The sequence spans 60 residues: Mastoparan-VT6 (60 aa).

Positions 1 to 27 (MKNTILILFTAFIALLGFFGMSAEALA) are cleaved as a signal peptide. 4 AXPX repeats span residues 27-30 (ADPK), 31-34 (ADPL), 35-38 (AGPN), and 41-44 (ADPE). Positions 28–45 (DPKADPLAGPNPDADPEA) are excised as a propeptide. L59 bears the Leucine amide mark.

Belongs to the MCD family. Mastoparan subfamily. In terms of tissue distribution, expressed by the venom gland.

It is found in the secreted. The synthetic peptide shows antimicrobial activities against Gram-negative bacteria (but not against all strains tested), Gram-positive bacteria (all strains tested) and the fungi C.albicans and C.parapsilosis. Exhibits little hemolytic activity against washed human erythrocytes. The sequence is that of Mastoparan-VT6 from Vespa tropica (Greater banded hornet).